Reading from the N-terminus, the 615-residue chain is RNA polymerase sigma factor RpoD (615 aa).

Residues 177–215 form a disordered region; it reads APTATHVGSELSQEDLDDDEDEDEEDGDDDAADDDNSID. Over residues 188 to 214 the composition is skewed to acidic residues; the sequence is SQEDLDDDEDEDEEDGDDDAADDDNSI. Residues 381–451 are sigma-70 factor domain-2; the sequence is MVEANLRLVI…TRSIADQART (71 aa). Residues 405–408 carry the Interaction with polymerase core subunit RpoC motif; the sequence is DLIQ. The sigma-70 factor domain-3 stretch occupies residues 460-536; that stretch reads ETINKLNRIS…DTTLELPLDS (77 aa). The interval 549–602 is sigma-70 factor domain-4; the sequence is VLAGLTAREAKVLRMRFGIDMNTDHTLEEVGKQFDVTRERIRQIEAKALRKLRH. The H-T-H motif DNA-binding region spans 575-594; sequence LEEVGKQFDVTRERIRQIEA.

The protein belongs to the sigma-70 factor family. RpoD/SigA subfamily. As to quaternary structure, interacts transiently with the RNA polymerase catalytic core.

Its subcellular location is the cytoplasm. Sigma factors are initiation factors that promote the attachment of RNA polymerase to specific initiation sites and are then released. This sigma factor is the primary sigma factor during exponential growth. The chain is RNA polymerase sigma factor RpoD from Salmonella typhi.